We begin with the raw amino-acid sequence, 1459 residues long: MNFSTLPPEINSALIFGGAGSEPMSAAAVAWDQLAMELASAAASFNSVTSGLVGESWLGPSSAAMAAAVAPYLGWLAAAAAQAQRSATQAAALVAEFEAVRAAMVQPALVAANRSDLVSLVFSNFFGQNAPAIAAIEAAYEQMWAIDVSVMSAYHAGASAVASALTPFTAPPQNLTDLPAQLAAAPAAVVTAAITSSKGVLANLSLGLANSGFGQMGAANLGILNLGSLNPGGNNFGLGNVGSNNVGLGNTGNGNIGFGNTGNGNIGFGLTGDNQQGFGGWNSGTGNIGLFNSGTGNIGIGNTGTGNFGIGNSGTSYNTGIGNTGQANTGFFNAGIANTGIGNTGNYNTGSFNLGSFNTGDFNTGSSNTGFFNPGNLNTGVGNTGNVNTGGFNSGNYSNGFFWRGDYQGLIGFSGTLTIPAAGLDLNGLGSVGPITIPSITIPEIGLGINSSGALVGPINVPPITVPAIGLGINSTGALVGPINIPPITLNSIGLELSAFQVINVGSISIPASPLAIGLFGVNPTVGSIGPGSISIQLGTPEIPAIPPFFPGFPPDYVTVSGQIGPITFLSGGYSLPAIPLGIDVGGGLGPFTVFPDGYSLPAIPLGIDVGGGLGPFTVFPDGYSLPAIPLGIDVGGGLGPFTVFPDGYSLPAIPLGIDVGGAIGPLTTPPITIPSIPLGIDVSGSLGPINIPIEIAGTPGFGNSTTTPSSGFFNSGTGGTSGFGNVGSGGSGFWNIAGNLGNSGFLNVGPLTSGILNFGNTVSGLYNTSTLGLATSAFHSGVGNTDSQLAGFMRNAAGGTLFNFGFANDGTLNLGNANLGDYNVGSGNVGSYNFGSGNIGNGSFGFGNIGSNNFGFGNVGSNNLGFANTGPGLTEALHNIGFGNIGGNNYGFANIGNGNIGFGNTGTGNIGIGLTGDNQVGFGALNSGSGNIGFFNSGNGNIGFFNSGNGNVGIGNSGNYNTGLGNVGNANTGLFNTGNVNTGIGNAGSYNTGSYNAGDTNTGDLNPGNANTGYLNLGDLNTGWGNIGDLNTGALISGSYSNGILWRGDYQGLIGYSDTLSIPAIPLSVEVNGGIGPIVVPDITIPGIPLSLNALGGVGPIVVPDITIPGIPLSLNALGGVGPIVVPDITIPGIPLSLNALGGVGPIVVPDITIPGIPLSLNALGGVGPIVVPDITIPGIPLSLNALGGVGPITVPGVPISRIPLTINIRIPVNITLNELPFNVAGIFTGYIGPIPLSTFVLGVTLAGGTLESGIQGFSVNPFGLNIPLSGATNAVTIPGFAINPFGLNVPLSGGTSPVTIPGFAINPFGLNVPLSGGTSPVTIPGFTIPGSPLNLTANGGLGPINIPINITSAPGFGNSTTTPSSGFFNSGDGSASGFGNVGPGISGLWNQVPNALQGGVSGIYNVGQLASGVANLGNTVSGFNNTSTVGHLTAAFNSGVNNIGQMLLGFFSPGAGP.

It belongs to the mycobacterial PPE family. As to quaternary structure, interacts with human TLR2.

Its subcellular location is the cell membrane. The protein localises to the secreted. The protein resides in the cell wall. It is found in the cell surface. Facilitates a shift in the ensuing immunity toward the Th2 phenotype and could aid in immune evasion by mycobacteria. Interacts with human Toll-like receptor 2 (TLR2) and triggers functional maturation of human dendritic cells (DCs), leading to secretion of IL-4, IL-5 and IL-10 from CD4(+) T cells and induction of Th2 immune response. Maturation of DCs involves PI3K, ERK1/2, p38 MAPK and NF-kappa-B signaling pathways. The protein is PPE family protein PPE34 of Mycobacterium tuberculosis (strain ATCC 25618 / H37Rv).